The sequence spans 516 residues: MSTIKFLRSSTHNALRSSLGWCRLAASRPRYDYDLVVLGGGSAGLACAKEAAGCGARVLCFDYVKPTPVGTKWGIGGTCVNVGCIPKKLMHQASLLGEAVHEAVAYGWNVDDTNIRPDWRKLVRSVQNHIKSVNWVTRVDLRDKKVEYVNSMATFRDSHTIEYVAMPGAEHRQVTSEYVVVAVGGRPRYPDIPGAVELGITSDDIFSYEREPGRTLVVGAGYVGLECACFLKGLGYEPTVMVRSIVLRGFDRQMSELLAAMMTERGIPFLGTTIPKAVERQADGRLLVRYRNTTTQMDGSDVFDTVLWAIGRKGLIEDLNLDAAGVKTHDDKIVVDAAEATSVPHIFAVGDIIYGRPELTPVAILSGRLLARRLFAGSTQLMDYADVATTVFTPLEYSCVGMSEETAIELRGADNIEVFHGYYKPTEFFIPQKSVRHCYLKAVAEVSGDQKILGLHYIGPVAGEVIQGFAAALKTGLTVKTLLNTVGIHPTTAEEFTRLSITKRSGRDPTPASCCS.

Residue 62–79 coordinates FAD; that stretch reads DYVKPTPVGTKWGIGGTC. A disulfide bond links Cys-79 and Cys-84. His-489 functions as the Proton acceptor in the catalytic mechanism.

Belongs to the class-I pyridine nucleotide-disulfide oxidoreductase family. Homodimer. Requires FAD as cofactor.

Its subcellular location is the mitochondrion. The catalysed reaction is [thioredoxin]-dithiol + NADP(+) = [thioredoxin]-disulfide + NADPH + H(+). Thioredoxin system is a major player in glutathione metabolism, due to the demonstrated absence of a glutathione reductase. Functionally interacts with the Sod/Cat reactive oxidation species (ROS) defense system and thereby has a role in preadult development and life span. Lack of a glutathione reductase suggests antioxidant defense in Drosophila, and probably in related insects, differs fundamentally from that in other organisms. This chain is Thioredoxin reductase 2, mitochondrial, found in Drosophila melanogaster (Fruit fly).